We begin with the raw amino-acid sequence, 314 residues long: Dihydroorotate dehydrogenase (fumarate) (314 aa).

Substrate is bound by residues Lys-46, 70–74, and Asn-130; that span reads NSMGL. Lys-46 participates in a covalent cross-link: Glycyl lysine isopeptide (Lys-Gly) (interchain with G-Cter in ubiquitin). Residue 46–47 participates in FMN binding; the sequence is KS. Asn-130 provides a ligand contact to FMN. Cys-133 acts as the Nucleophile in catalysis. Residues Lys-167 and Ile-195 each contribute to the FMN site. Substrate is bound at residue 196–197; sequence NS. FMN contacts are provided by residues Gly-224, 252 to 253, and 274 to 275; these read GG and GT.

The protein belongs to the dihydroorotate dehydrogenase family. Type 1 subfamily. As to quaternary structure, homodimer. The cofactor is FMN.

The protein resides in the cytoplasm. It carries out the reaction (S)-dihydroorotate + fumarate = orotate + succinate. It functions in the pathway pyrimidine metabolism; UMP biosynthesis via de novo pathway. Its activity is regulated as follows. The activity is independent of the presence of oxygen. Catalyzes the conversion of dihydroorotate to orotate with fumarate as the electron acceptor. Molecular oxygen can replace fumarate in vitro. Does not use oxaloacetate or NAD or NADP as electron acceptors. The sequence is that of Dihydroorotate dehydrogenase (fumarate) (URA1) from Saccharomyces cerevisiae (strain ATCC 204508 / S288c) (Baker's yeast).